The sequence spans 248 residues: 2,3-bisphosphoglycerate-dependent phosphoglycerate mutase (248 aa).

Residues 8–15 (RHGESEWN), 21–22 (TG), Arg-60, 87–90 (ERHY), Lys-98, 114–115 (RR), and 183–184 (GN) each bind substrate. His-9 acts as the Tele-phosphohistidine intermediate in catalysis. Glu-87 (proton donor/acceptor) is an active-site residue.

Belongs to the phosphoglycerate mutase family. BPG-dependent PGAM subfamily.

The enzyme catalyses (2R)-2-phosphoglycerate = (2R)-3-phosphoglycerate. Its pathway is carbohydrate degradation; glycolysis; pyruvate from D-glyceraldehyde 3-phosphate: step 3/5. Functionally, catalyzes the interconversion of 2-phosphoglycerate and 3-phosphoglycerate. In Borrelia garinii subsp. bavariensis (strain ATCC BAA-2496 / DSM 23469 / PBi) (Borreliella bavariensis), this protein is 2,3-bisphosphoglycerate-dependent phosphoglycerate mutase.